Here is a 423-residue protein sequence, read N- to C-terminus: Pre-mRNA-splicing regulator WTAP (423 aa).

Residues 234 to 423 form a disordered region; it reads QQLSQMNQTQ…TSNASAGSVL (190 aa). Polar residues-rich tracts occupy residues 239-276, 285-301, 358-377, and 392-404; these read MNQT…SSNV, NGPS…SGSS, DSPT…TDSN, and TAGT…NGLD. Low complexity predominate over residues 405 to 423; the sequence is SSAAAVATNTSNASAGSVL.

Belongs to the fl(2)d family. Component of the WMM complex, a N6-methyltransferase complex composed of a catalytic subcomplex, named MAC, and of an associated subcomplex, named MACOM. Component of the MACOM subcomplex.

It is found in the nucleus speckle. It localises to the nucleus. Its subcellular location is the nucleoplasm. Functionally, associated component of the WMM complex, a complex that mediates N6-methyladenosine (m6A) methylation of RNAs, a modification that plays a role in the efficiency of mRNA splicing and RNA processing. The protein is Pre-mRNA-splicing regulator WTAP of Danio rerio (Zebrafish).